A 60-amino-acid polypeptide reads, in one-letter code: Ferredoxin-1 (60 aa).

4Fe-4S ferredoxin-type domains lie at 2–27 and 28–60; these read LYITEECTYCGACEPECPVTAISAGD and DIYVIDANTCNECAGLDEQACVAVCPAECIVQG. Cys8, Cys11, Cys14, Cys18, Cys37, Cys40, Cys48, and Cys52 together coordinate [4Fe-4S] cluster.

Requires [4Fe-4S] cluster as cofactor.

In terms of biological role, ferredoxins are iron-sulfur proteins that transfer electrons in a wide variety of metabolic reactions. In Chlorobium limicola, this protein is Ferredoxin-1.